The following is a 496-amino-acid chain: GTPase Der (496 aa).

EngA-type G domains are found at residues 3 to 166 (PVVA…FDNL) and 208 to 381 (IKLA…RSAT). Residues 9–16 (GRPNVGKS), 56–60 (DTGGI), 118–121 (NKVD), 214–221 (GRPNVGKS), 261–265 (DTAGV), and 326–329 (NKWD) each bind GTP. Residues 382–466 (TRVGTSVLTR…PIRIQFQNSD (85 aa)) enclose the KH-like domain.

It belongs to the TRAFAC class TrmE-Era-EngA-EngB-Septin-like GTPase superfamily. EngA (Der) GTPase family. As to quaternary structure, associates with the 50S ribosomal subunit.

GTPase that plays an essential role in the late steps of ribosome biogenesis. This is GTPase Der from Vibrio vulnificus (strain CMCP6).